The sequence spans 317 residues: Acetyl-coenzyme A carboxylase carboxyl transferase subunit beta (317 aa).

A disordered region spans residues 1-28 (MANNMTDTMTKFDTNNDSASLQQNGNKA). The region spanning 55 to 317 (PSTKCSSCHS…LCSVPNVDAQ (263 aa)) is the CoA carboxyltransferase N-terminal domain. Residues C59, C62, C78, and C81 each contribute to the Zn(2+) site. The C4-type zinc-finger motif lies at 59–81 (CSSCHSVITNTALIFNCYVCPHC).

This sequence belongs to the AccD/PCCB family. In terms of assembly, acetyl-CoA carboxylase is a heterohexamer composed of biotin carboxyl carrier protein (AccB), biotin carboxylase (AccC) and two subunits each of ACCase subunit alpha (AccA) and ACCase subunit beta (AccD). Zn(2+) is required as a cofactor.

The protein resides in the cytoplasm. The catalysed reaction is N(6)-carboxybiotinyl-L-lysyl-[protein] + acetyl-CoA = N(6)-biotinyl-L-lysyl-[protein] + malonyl-CoA. It functions in the pathway lipid metabolism; malonyl-CoA biosynthesis; malonyl-CoA from acetyl-CoA: step 1/1. In terms of biological role, component of the acetyl coenzyme A carboxylase (ACC) complex. Biotin carboxylase (BC) catalyzes the carboxylation of biotin on its carrier protein (BCCP) and then the CO(2) group is transferred by the transcarboxylase to acetyl-CoA to form malonyl-CoA. This chain is Acetyl-coenzyme A carboxylase carboxyl transferase subunit beta, found in Psychrobacter arcticus (strain DSM 17307 / VKM B-2377 / 273-4).